A 223-amino-acid chain; its full sequence is Immediate early response gene 2 protein (223 aa).

Residue methionine 1 is modified to N-acetylmethionine. Residues 63-172 form a disordered region; it reads AALPSDPRLH…PPAQAEGAFP (110 aa). Residues 69 to 78 are compositionally biased toward basic and acidic residues; sequence PRLHPPREAE. Positions 125 to 138 are enriched in low complexity; sequence SSLSDGGDAGLVPS.

The protein belongs to the IER family. In terms of tissue distribution, expressed in activated T-cells (at protein level). Expression increases in metastatic tumor cells (at protein level).

Its subcellular location is the cytoplasm. It is found in the nucleus. Its function is as follows. DNA-binding protein that seems to act as a transcription factor. Involved in the regulation of neuronal differentiation, acts upon JNK-signaling pathway activation and plays a role in neurite outgrowth in hippocampal cells. May mediate with FIBP FGF-signaling in the establishment of laterality in the embryo. Promotes cell motility, seems to stimulate tumor metastasis. This chain is Immediate early response gene 2 protein, found in Homo sapiens (Human).